Here is a 260-residue protein sequence, read N- to C-terminus: Alpha- and beta-fibrinogenase OhS1 (260 aa).

Positions 1–18 (MALIRVLASLLILQLSYA) are cleaved as a signal peptide. A propeptide spanning residues 19 to 24 (VTPFDR) is cleaved from the precursor. The Peptidase S1 domain maps to 25 to 248 (IIGGFECNEY…YIDWIEGIIA (224 aa)). 6 disulfides stabilise this stretch: cysteine 31-cysteine 163, cysteine 50-cysteine 66, cysteine 98-cysteine 255, cysteine 142-cysteine 209, cysteine 174-cysteine 188, and cysteine 199-cysteine 224. N-linked (GlcNAc...) asparagine glycosylation is present at asparagine 44. The active-site Charge relay system is histidine 65. A glycan (N-linked (GlcNAc...) asparagine) is linked at asparagine 79. Residue aspartate 110 is the Charge relay system of the active site. N-linked (GlcNAc...) asparagine glycosylation is found at asparagine 117 and asparagine 121. The active-site Charge relay system is serine 203. Asparagine 250 carries an N-linked (GlcNAc...) asparagine glycan.

The protein belongs to the peptidase S1 family. Snake venom subfamily. As to quaternary structure, monomer. In terms of tissue distribution, expressed by the venom gland.

It localises to the secreted. Its activity is regulated as follows. Completely inhibited by NPGB, PMSF, diisopropylfluorophosphate (DFP), benzamidine and soybean trypsin inhibitor. Not inhibited by EDTA. Functionally, snake venom serine protease that possesses potent fibrinogenolytic (on both alpha- (FGA) and beta-chains (FGB)) and amidolytic activities. Selectively cleaves Arg-|-Xaa or Lys-|-Xaa bonds. In Ophiophagus hannah (King cobra), this protein is Alpha- and beta-fibrinogenase OhS1.